Consider the following 612-residue polypeptide: E3 ubiquitin-protein ligase synoviolin (612 aa).

Topologically, residues 1–4 are cytoplasmic; the sequence is MFRT. The involved in FAM8A1 interaction stretch occupies residues 1 to 251; that stretch reads MFRTAVMMAA…LFAIRPMYLA (251 aa). Residues 5 to 25 traverse the membrane as a helical segment; that stretch reads AVMMAASLALTGAVVAHAYYL. The interaction with SEL1L stretch occupies residues 21–42; it reads HAYYLKHQFYPTVVYLTKSSPS. Residues 26–41 are Lumenal-facing; the sequence is KHQFYPTVVYLTKSSP. A helical transmembrane segment spans residues 42–62; that stretch reads SMAVLYIQAFVLVFLLGKVMG. Topologically, residues 63–98 are cytoplasmic; it reads KVFFGQLRAAEMEHLLERSWYAVTETCLAFTVFRDD. A helical membrane pass occupies residues 99–119; that stretch reads FSPRFVALFTLLLFLKCFHWL. Residues 120–140 lie on the Lumenal side of the membrane; that stretch reads AEDRVDFMERSPNISWLFHCR. Residues 141–161 form a helical membrane-spanning segment; it reads IVSLMFLLGILDFLFVSHAYH. Topologically, residues 162–169 are cytoplasmic; it reads SILTRGAS. The chain crosses the membrane as a helical span at residues 170 to 190; the sequence is VQLVFGFEYAILMTMVLTIFI. Over 191 to 224 the chain is Lumenal; that stretch reads KYVLHSVDLQSENPWDNKAVYMLYTELFTGFIKV. Residues 225 to 245 form a helical membrane-spanning segment; sequence LLYMAFMTIMIKVHTFPLFAI. The interaction with p53/TP53 stretch occupies residues 236 to 270; it reads KVHTFPLFAIRPMYLAMRQFKKAVTDAIMSRRAIR. Residues 246–612 are Cytoplasmic-facing; sequence RPMYLAMRQF…LQKLESPVAH (367 aa). Residues C291, C294, C307, H309, H312, C315, C326, and C329 each coordinate Zn(2+). An RING-type; atypical zinc finger spans residues 291-330; the sequence is CIICREEMVTGAKRLPCNHIFHTSCLRSWFQRQQTCPTCR. 2 disordered regions span residues 337–375 and 393–449; these read SLPA…GLLP and PVPP…PGFP. Pro residues-rich tracts occupy residues 341–375 and 393–409; these read QSPP…GLLP and PVPP…PPPT. Positions 416-434 are enriched in low complexity; the sequence is PSGAATTTAAGTSTSAPAP. Residues 435-449 are compositionally biased toward pro residues; that stretch reads GSVPGPEAGPAPGFP. The interval 474–529 is HAF-H domain; necessary to form higher-order Hrd1 complexes; that stretch reads GFAGLTPEELRALEGHERQHLEARLQSLRNIHTLLDAAMLQINQYLTVLASLGPPR. The interval 530–612 is disordered; it reads PATSVNPTEE…LQKLESPVAH (83 aa). Residues 539-559 are compositionally biased toward low complexity; sequence ETASTVVSAAPSTSAPSSEAP. A compositionally biased stretch (pro residues) spans 560–570; sequence TPSPGASPPIP. Over residues 586-595 the composition is skewed to acidic residues; it reads ELPEDGEPDA. The residue at position 608 (S608) is a Phosphoserine.

This sequence belongs to the HRD1 family. In terms of assembly, homodimer. Interacts with p53/TP53. Interacts with HTT. Component of the HRD1 complex, which comprises at least SYNV1/HRD1, DERL1/2, FAM8A1, HERPUD1/HERP, OS9, SEL1L and UBE2J1. FAM8A1 is stabilized by interaction with SYNV1, which prevents its proteasomal degradation. OS9 and UBE2J1 recruitment to the complex may be mediated by SEL1L. SYNV1 assembles with SEL1L and FAM8A1 through its transmembrane domains, but interaction with its cytoplasmic domain is required to confer stability to FAM8A1 and enhance recruitment of HERPUD1. The HRD1 complex also associates with VIMP and may transfer misfolded proteins from the endoplasmic reticulum to VCP. May form a complex with ERLEC1; HSPA5; OS9 and SEL1L. Interacts with VCP. Interacts with UBXN6. Interacts with BAG6. Interacts with NFE2L1. Interacts (via N-terminus) with components of the pre-B cell receptor, including IGLL1 and VPREB1A. Interacts with CREB3L3; this interaction leads to CREB3L3 ubiquitination and proteasomal degradation. Post-translationally, auto-ubiquitinated. Deubiquitinated by USP19. As to expression, widely expressed, with highest levels in bone, spleen, lung and testis. In the brain, present in neurons but not in glial cells. Up-regulated in synovial tissues from mice with collagen-induced arthritis (at protein level). Expressed in the liver.

Its subcellular location is the endoplasmic reticulum membrane. It catalyses the reaction S-ubiquitinyl-[E2 ubiquitin-conjugating enzyme]-L-cysteine + [acceptor protein]-L-lysine = [E2 ubiquitin-conjugating enzyme]-L-cysteine + N(6)-ubiquitinyl-[acceptor protein]-L-lysine.. It functions in the pathway protein modification; protein ubiquitination. Functionally, E3 ubiquitin-protein ligase which accepts ubiquitin specifically from endoplasmic reticulum-associated UBC7 E2 ligase and transfers it to substrates, promoting their degradation. Component of the endoplasmic reticulum quality control (ERQC) system also called ER-associated degradation (ERAD) involved in ubiquitin-dependent degradation of misfolded endoplasmic reticulum proteins. Also promotes the degradation of normal but naturally short-lived proteins such as SGK. Protects cells from ER stress-induced apoptosis. Sequesters p53/TP53 in the cytoplasm and promotes its degradation, thereby negatively regulating its biological function in transcription, cell cycle regulation and apoptosis. Required for embryogenesis. Mediates the ubiquitination and subsequent degradation of cytoplasmic NFE2L1. During the early stage of B cell development, required for degradation of the pre-B cell receptor (pre-BCR) complex, hence supporting further differentiation into mature B cells. The polypeptide is E3 ubiquitin-protein ligase synoviolin (Syvn1) (Mus musculus (Mouse)).